The following is a 720-amino-acid chain: Connector enhancer of kinase suppressor of ras 1 (720 aa).

The 64-residue stretch at 7 to 70 folds into the SAM domain; that stretch reads WTPGKVATWL…LGGVEQLQAL (64 aa). Residues 78-164 enclose the CRIC domain; the sequence is NLQSLTEGLL…QVLHEDGPAA (87 aa). The region spanning 196–285 is the PDZ domain; sequence KAVLEQVQLD…GLSLVLKKIP (90 aa). The interval 285–390 is disordered; that stretch reads PIPETPPQTP…RKKSKGLATR (106 aa). Over residues 304-317 the composition is skewed to low complexity; it reads RSPSLSLAPLSPRA. Ser-307 and Ser-314 each carry phosphoserine. Positions 348 to 359 are enriched in pro residues; sequence EPLPIPPEPPAI. Over residues 379–390 the composition is skewed to basic residues; it reads VGRKKSKGLATR. A PH domain is found at 403–502; the sequence is RPDCDGWLLL…WVRHLITCIS (100 aa). The tract at residues 504–573 is disordered; the sequence is YQSPGRAPPP…TSFGSLTDSS (70 aa). Acidic residues predominate over residues 518–530; the sequence is CYSETEAEDPDDE. Residues 533 to 546 are compositionally biased toward low complexity; that stretch reads SHSASPSPAQAGSP. A compositionally biased stretch (polar residues) spans 553 to 571; the sequence is PAATPTQRSPRTSFGSLTD. The stretch at 615–646 forms a coiled coil; that stretch reads QLNERVHRVRALQSTLKAKLQELQVLEEVLGD. The interval 676-720 is disordered; it reads QAEGSSHILTSDSTEQSPHSLPSDPEEHSHLCPLTSESSLRPPDL. Residues 678–695 show a composition bias toward polar residues; that stretch reads EGSSHILTSDSTEQSPHS.

The protein belongs to the CNKSR family. Interacts with RHO and RALGDS. In terms of processing, phosphorylated on tyrosine.

The protein resides in the cytoplasm. It localises to the membrane. Functionally, may function as an adapter protein or regulator of Ras signaling pathways. This is Connector enhancer of kinase suppressor of ras 1 (CNKSR1) from Homo sapiens (Human).